A 334-amino-acid chain; its full sequence is 6-phosphogluconolactonase (334 aa).

This sequence belongs to the cycloisomerase 2 family.

The catalysed reaction is 6-phospho-D-glucono-1,5-lactone + H2O = 6-phospho-D-gluconate + H(+). It functions in the pathway carbohydrate degradation; pentose phosphate pathway; D-ribulose 5-phosphate from D-glucose 6-phosphate (oxidative stage): step 2/3. Functionally, catalyzes the hydrolysis of 6-phosphogluconolactone to 6-phosphogluconate. The sequence is that of 6-phosphogluconolactonase from Buchnera aphidicola subsp. Acyrthosiphon pisum (strain APS) (Acyrthosiphon pisum symbiotic bacterium).